Reading from the N-terminus, the 299-residue chain is Very long chain fatty acid elongase 5 (299 aa).

Met-1 carries the post-translational modification N-acetylmethionine. The next 7 helical transmembrane spans lie at 26 to 46 (WFLLDNYVPTLVCSILYLLIV), 64 to 84 (ILVVYNLGLTLLSLYMFCELV), 112 to 132 (VLWWYYFSKLIEFMDTFFFIL), 139 to 158 (ITVLHVYHHASMLNIWWFVM), 168 to 187 (FGATLNSFIHVLMYSYYGLS), 205 to 225 (GQLLQFVLTIIQTSCGVIWPC), and 226 to 246 (TFPLGWLYFQIGYMISLITLF). Ser-285 is subject to Phosphoserine.

The protein belongs to the ELO family. ELOVL5 subfamily. Interacts with TECR.

Its subcellular location is the endoplasmic reticulum membrane. The protein resides in the cell projection. It is found in the dendrite. The catalysed reaction is a very-long-chain acyl-CoA + malonyl-CoA + H(+) = a very-long-chain 3-oxoacyl-CoA + CO2 + CoA. It carries out the reaction (6Z,9Z,12Z)-octadecatrienoyl-CoA + malonyl-CoA + H(+) = (8Z,11Z,14Z)-3-oxoeicosatrienoyl-CoA + CO2 + CoA. It catalyses the reaction (9Z,12Z,15Z)-octadecatrienoyl-CoA + malonyl-CoA + H(+) = (11Z,14Z,17Z)-3-oxoeicosatrienoyl-CoA + CO2 + CoA. The enzyme catalyses (9Z)-hexadecenoyl-CoA + malonyl-CoA + H(+) = 3-oxo-(11Z)-octadecenoyl-CoA + CO2 + CoA. The catalysed reaction is (9Z)-octadecenoyl-CoA + malonyl-CoA + H(+) = 3-oxo-(11Z)-eicosenoyl-CoA + CO2 + CoA. It carries out the reaction (11Z)-octadecenoyl-CoA + malonyl-CoA + H(+) = 3-oxo-(13Z)-eicosenoyl-CoA + CO2 + CoA. It catalyses the reaction (9Z,12Z)-octadecadienoyl-CoA + malonyl-CoA + H(+) = (11Z,14Z)-3-oxoicosa-11,14-dienoyl-CoA + CO2 + CoA. The enzyme catalyses (6Z,9Z,12Z,15Z)-octadecatetraenoyl-CoA + malonyl-CoA + H(+) = (8Z,11Z,14Z,17Z)-3-oxoicosatetraenoyl-CoA + CO2 + CoA. The catalysed reaction is (5Z,8Z,11Z,14Z)-eicosatetraenoyl-CoA + malonyl-CoA + H(+) = (7Z,10Z,13Z,16Z)-3-oxodocosatetraenoyl-CoA + CO2 + CoA. It carries out the reaction (5Z,8Z,11Z,14Z,17Z)-eicosapentaenoyl-CoA + malonyl-CoA + H(+) = 3-oxo-(7Z,10Z,13Z,16Z,19Z)-docosapentaenoyl-CoA + CO2 + CoA. It participates in lipid metabolism; polyunsaturated fatty acid biosynthesis. In terms of biological role, catalyzes the first and rate-limiting reaction of the four reactions that constitute the long-chain fatty acids elongation cycle. This endoplasmic reticulum-bound enzymatic process allows the addition of 2 carbons to the chain of long- and very long-chain fatty acids (VLCFAs) per cycle. Condensing enzyme that acts specifically toward polyunsaturated acyl-CoA with the higher activity toward C18:3(n-6) acyl-CoA. May participate in the production of monounsaturated and of polyunsaturated VLCFAs of different chain lengths that are involved in multiple biological processes as precursors of membrane lipids and lipid mediators. In conditions where the essential linoleic and alpha linoleic fatty acids are lacking it is also involved in the synthesis of Mead acid from oleic acid. The polypeptide is Very long chain fatty acid elongase 5 (Bos taurus (Bovine)).